A 20-amino-acid chain; its full sequence is Cytochrome P450 2A7 (20 aa).

This sequence belongs to the cytochrome P450 family. Heme is required as a cofactor.

Its subcellular location is the endoplasmic reticulum membrane. It is found in the microsome membrane. The enzyme catalyses an organic molecule + reduced [NADPH--hemoprotein reductase] + O2 = an alcohol + oxidized [NADPH--hemoprotein reductase] + H2O + H(+). Exhibits a high coumarin 7-hydroxylase activity. This Papio sp. (Baboon) protein is Cytochrome P450 2A7 (CYP2A7).